The sequence spans 202 residues: Transmembrane 4 L6 family member 4 (202 aa).

Topologically, residues 1 to 9 are cytoplasmic; the sequence is MCTGGCARC. The helical transmembrane segment at 10-30 threads the bilayer; that stretch reads LGGTLIPLAVFGLLANILLFF. Residues 31–48 are Extracellular-facing; it reads PGGKVVNDKSHLSDEVWY. A helical transmembrane segment spans residues 49 to 69; that stretch reads FGGILGSGVLMIFPALVFLGL. At 70 to 93 the chain is on the cytoplasmic side; that stretch reads QNNDCCGCCGNEGCGKRFAMFTST. The chain crosses the membrane as a helical span at residues 94 to 114; that stretch reads LFAVIGFLGAGYSFIVSAVSI. Residues 115–158 are Extracellular-facing; it reads NKGPKCFMANGTWGYPFHDGDYLKDQALWSECEEPRDVVPWNLT. Asparagine 156 carries an N-linked (GlcNAc...) asparagine glycan. Residues 159-179 traverse the membrane as a helical segment; it reads LFSILLVIGGIQMVLCAIQVI. The Cytoplasmic portion of the chain corresponds to 180–202; that stretch reads NGLLGTLCGDCQCCGCCGGDGPV.

This sequence belongs to the L6 tetraspanin family.

It is found in the membrane. In terms of biological role, regulates the adhesive and proliferative status of intestinal epithelial cells. Can mediate density-dependent cell proliferation. The protein is Transmembrane 4 L6 family member 4 (Tm4sf4) of Mus musculus (Mouse).